The following is a 435-amino-acid chain: Enolase (435 aa).

Residue glutamine 167 coordinates (2R)-2-phosphoglycerate. The active-site Proton donor is glutamate 209. Residues aspartate 246, glutamate 291, and aspartate 318 each coordinate Mg(2+). (2R)-2-phosphoglycerate contacts are provided by lysine 343, arginine 372, serine 373, and lysine 394. Lysine 343 functions as the Proton acceptor in the catalytic mechanism.

It belongs to the enolase family. Component of the RNA degradosome, a multiprotein complex involved in RNA processing and mRNA degradation. Mg(2+) serves as cofactor.

Its subcellular location is the cytoplasm. It is found in the secreted. The protein resides in the cell surface. It catalyses the reaction (2R)-2-phosphoglycerate = phosphoenolpyruvate + H2O. The protein operates within carbohydrate degradation; glycolysis; pyruvate from D-glyceraldehyde 3-phosphate: step 4/5. Its function is as follows. Catalyzes the reversible conversion of 2-phosphoglycerate (2-PG) into phosphoenolpyruvate (PEP). It is essential for the degradation of carbohydrates via glycolysis. This is Enolase from Psychromonas ingrahamii (strain DSM 17664 / CCUG 51855 / 37).